Consider the following 134-residue polypeptide: Lymphocyte antigen 6A-2/6E-1 (134 aa).

An N-terminal signal peptide occupies residues 1-26 (MDTSHTTKSCLLILLVALLCAERAQG). Positions 27–119 (LECYQCYGVP…NGGSTWTMAG (93 aa)) constitute a UPAR/Ly6 domain. 5 disulfides stabilise this stretch: cysteine 29-cysteine 53, cysteine 32-cysteine 41, cysteine 46-cysteine 74, cysteine 78-cysteine 98, and cysteine 99-cysteine 104. Glycine 112 carries GPI-anchor amidated glycine lipidation. Residues 113–134 (STWTMAGVLLFSLSSVLLQTLL) constitute a propeptide, removed in mature form.

O-glycosylated. Not N-glycosylated. In terms of processing, not phosphorylated. Widely expressed.

Its subcellular location is the cell membrane. Functionally, T-cell activation. The polypeptide is Lymphocyte antigen 6A-2/6E-1 (Ly6a) (Mus musculus (Mouse)).